We begin with the raw amino-acid sequence, 23 residues long: Potassium channel toxin alpha-KTx 13.4 (23 aa).

3 cysteine pairs are disulfide-bonded: Cys2–Cys15, Cys5–Cys20, and Cys9–Cys22. Positions Gly13–Cys20 are interaction with Ca(2+)-activated K(+) channels. A Tyrosine amide modification is found at Tyr23.

Expressed by the venom gland.

Its subcellular location is the secreted. In terms of biological role, blocks the potassium channel Shaker B. This is Potassium channel toxin alpha-KTx 13.4 from Tityus stigmurus (Brazilian scorpion).